Here is a 592-residue protein sequence, read N- to C-terminus: A-type ATP synthase subunit A (592 aa).

Residue 233-240 (GPFGSGKT) participates in ATP binding.

It belongs to the ATPase alpha/beta chains family. As to quaternary structure, has multiple subunits with at least A(3), B(3), C, D, E, F, H, I and proteolipid K(x).

It localises to the cell membrane. The enzyme catalyses ATP + H2O + 4 H(+)(in) = ADP + phosphate + 5 H(+)(out). Its function is as follows. Component of the A-type ATP synthase that produces ATP from ADP in the presence of a proton gradient across the membrane. The A chain is the catalytic subunit. The protein is A-type ATP synthase subunit A of Saccharolobus solfataricus (strain ATCC 35092 / DSM 1617 / JCM 11322 / P2) (Sulfolobus solfataricus).